The following is a 309-amino-acid chain: Pantothenate kinase (309 aa).

92–99 lines the ATP pocket; the sequence is GSVAVGKS.

This sequence belongs to the prokaryotic pantothenate kinase family.

It is found in the cytoplasm. The enzyme catalyses (R)-pantothenate + ATP = (R)-4'-phosphopantothenate + ADP + H(+). Its pathway is cofactor biosynthesis; coenzyme A biosynthesis; CoA from (R)-pantothenate: step 1/5. The sequence is that of Pantothenate kinase from Latilactobacillus sakei subsp. sakei (strain 23K) (Lactobacillus sakei subsp. sakei).